Here is a 407-residue protein sequence, read N- to C-terminus: Cation efflux system protein CusB (407 aa).

The signal sequence occupies residues 1–28 (MKKIALIIGSMIAGGIISAAGFTWVAKA).

It belongs to the membrane fusion protein (MFP) (TC 8.A.1) family. As to quaternary structure, the cus efflux system is composed of CusA, CusB, CusC and CusF.

Its function is as follows. Part of a cation efflux system that mediates resistance to copper and silver. The chain is Cation efflux system protein CusB (cusB) from Escherichia coli (strain K12).